Here is a 680-residue protein sequence, read N- to C-terminus: DNA ligase (680 aa).

NAD(+)-binding positions include 32–36 (DAVYD), 81–82 (SL), and glutamate 115. Catalysis depends on lysine 117, which acts as the N6-AMP-lysine intermediate. NAD(+) is bound by residues arginine 138, glutamate 175, lysine 291, and lysine 315. Zn(2+)-binding residues include cysteine 409, cysteine 412, cysteine 427, and cysteine 432. Positions 600–680 (ASEQHLKGLT…RLQAMLKDSP (81 aa)) constitute a BRCT domain.

It belongs to the NAD-dependent DNA ligase family. LigA subfamily. Mg(2+) serves as cofactor. It depends on Mn(2+) as a cofactor.

The catalysed reaction is NAD(+) + (deoxyribonucleotide)n-3'-hydroxyl + 5'-phospho-(deoxyribonucleotide)m = (deoxyribonucleotide)n+m + AMP + beta-nicotinamide D-nucleotide.. DNA ligase that catalyzes the formation of phosphodiester linkages between 5'-phosphoryl and 3'-hydroxyl groups in double-stranded DNA using NAD as a coenzyme and as the energy source for the reaction. It is essential for DNA replication and repair of damaged DNA. This Synechococcus sp. (strain CC9902) protein is DNA ligase.